The chain runs to 1226 residues: Phosphatidylinositol 3,4,5-trisphosphate 5-phosphatase 2B (1226 aa).

The SH2 domain occupies 6–102; that stretch reads WYHRDISRVR…GLVAPLLYPV (97 aa). The disordered stretch occupies residues 106–144; sequence SEANDESSDGDDEKPGSTFANSPPRAISPTATSPPSSSA. Residues 108 to 117 are compositionally biased toward acidic residues; it reads ANDESSDGDD. Residues 127 to 144 show a composition bias toward low complexity; that stretch reads SPPRAISPTATSPPSSSA. An NPXY motif motif is present at residues 906-909; it reads NPAY. Tyr-909 carries the post-translational modification Phosphotyrosine. Disordered regions lie at residues 945-964 and 985-1035; these read RVTG…DFTE and SSAA…LSGK. Residues 1011-1025 are compositionally biased toward low complexity; sequence HSSNSSLQLQSHKNN. The region spanning 1163–1226 is the SAM domain; it reads GAPETVRELL…ILENLPKIWD (64 aa).

It belongs to the inositol 1,4,5-trisphosphate 5-phosphatase family. Tyrosine phosphorylated by the members of the SRC family after exposure to a diverse array of extracellular stimuli.

The protein resides in the cytoplasm. Its subcellular location is the cytosol. It localises to the cytoskeleton. The protein localises to the membrane. It is found in the cell projection. The protein resides in the filopodium. Its subcellular location is the lamellipodium. It localises to the nucleus. The protein localises to the nucleus speckle. The enzyme catalyses a 1,2-diacyl-sn-glycero-3-phospho-(1D-myo-inositol-3,4,5-trisphosphate) + H2O = a 1,2-diacyl-sn-glycero-3-phospho-(1D-myo-inositol-3,4-bisphosphate) + phosphate. Phosphatidylinositol (PtdIns) phosphatase that specifically hydrolyzes the 5-phosphate of phosphatidylinositol-3,4,5-trisphosphate (PtdIns(3,4,5)P3) to produce PtdIns(3,4)P2, thereby negatively regulating the PI3K (phosphoinositide 3-kinase) pathways. Plays a central role in regulation of PI3K-dependent insulin signaling, although the precise molecular mechanisms and signaling pathways remain unclear. Part of a signaling pathway that regulates actin cytoskeleton remodeling. Required for the maintenance and dynamic remodeling of actin structures as well as in endocytosis, having a major impact on ligand-induced EGFR internalization and degradation. Participates in regulation of cortical and submembraneous actin. Regulates cell adhesion and cell spreading. Acts as a negative regulator of the FC-gamma-RIIA receptor (FCGR2A). Mediates signaling from the FC-gamma-RIIB receptor (FCGR2B), playing a central role in terminating signal transduction from activating immune/hematopoietic cell receptor systems. May also hydrolyze PtdIns(1,3,4,5)P4, and could thus affect the levels of the higher inositol polyphosphates like InsP6. The polypeptide is Phosphatidylinositol 3,4,5-trisphosphate 5-phosphatase 2B (inppl1b) (Danio rerio (Zebrafish)).